A 288-amino-acid polypeptide reads, in one-letter code: 4-diphosphocytidyl-2-C-methyl-D-erythritol kinase (288 aa).

Lys-10 is an active-site residue. Residue 99 to 109 participates in ATP binding; that stretch reads PMGGGLGGGSS. Asp-141 is an active-site residue.

This sequence belongs to the GHMP kinase family. IspE subfamily. In terms of assembly, homodimer.

It catalyses the reaction 4-CDP-2-C-methyl-D-erythritol + ATP = 4-CDP-2-C-methyl-D-erythritol 2-phosphate + ADP + H(+). It functions in the pathway isoprenoid biosynthesis; isopentenyl diphosphate biosynthesis via DXP pathway; isopentenyl diphosphate from 1-deoxy-D-xylulose 5-phosphate: step 3/6. Catalyzes the phosphorylation of the position 2 hydroxy group of 4-diphosphocytidyl-2C-methyl-D-erythritol. The protein is 4-diphosphocytidyl-2-C-methyl-D-erythritol kinase of Serratia proteamaculans (strain 568).